Reading from the N-terminus, the 92-residue chain is C-C motif chemokine 22 (92 aa).

An N-terminal signal peptide occupies residues 1–24 (MATLRVPLLVALVLLAVAIQTSDA). 2 disulfides stabilise this stretch: Cys-36–Cys-60 and Cys-37–Cys-76.

The protein belongs to the intercrine beta (chemokine CC) family. In terms of tissue distribution, expressed by activated splenic B-lymphocytes and dendritic cells. Low expression in lung, thymocytes, lymph node, and unstimulated splenic cells.

Its subcellular location is the secreted. Its function is as follows. Chemotactic for activated T-lymphocytes. May play an important role in the collaboration of dendritic cells and B-lymphocytes with T-cells in immune responses. In Mus musculus (Mouse), this protein is C-C motif chemokine 22 (Ccl22).